Here is a 229-residue protein sequence, read N- to C-terminus: GTP cyclohydrolase 1 (229 aa).

The interval 1–31 is disordered; it reads MFRESDNTIAPSNQDLNKPVVDKEQPAERTP. The span at 7-16 shows a compositional bias: polar residues; sequence NTIAPSNQDL. 3 residues coordinate Zn(2+): Cys-117, His-120, and Cys-188.

Belongs to the GTP cyclohydrolase I family. As to quaternary structure, toroid-shaped homodecamer, composed of two pentamers of five dimers.

It catalyses the reaction GTP + H2O = 7,8-dihydroneopterin 3'-triphosphate + formate + H(+). It participates in cofactor biosynthesis; 7,8-dihydroneopterin triphosphate biosynthesis; 7,8-dihydroneopterin triphosphate from GTP: step 1/1. This Rhodopirellula baltica (strain DSM 10527 / NCIMB 13988 / SH1) protein is GTP cyclohydrolase 1.